The primary structure comprises 113 residues: MMQKKKLQPPLLVTIAALVLCLPLLLTGCGNSKNAPVPSVVILPEIDTELTEATPVPPMPQPLTWGASLLWNADLLMALGQCNRDKASVREQEIRRKEIYERRPEPGGGAAAR.

The first 28 residues, 1–28 (MMQKKKLQPPLLVTIAALVLCLPLLLTG), serve as a signal peptide directing secretion. A lipid anchor (N-palmitoyl cysteine; by host) is attached at Cys-29. Cys-29 is lipidated: S-diacylglycerol cysteine; by host. The segment covering 91–105 (EQEIRRKEIYERRPE) has biased composition (basic and acidic residues). The interval 91–113 (EQEIRRKEIYERRPEPGGGAAAR) is disordered.

In terms of assembly, interacts with the spanin inner membrane subunit. Part of the spanin complex which spans the entire periplasmic space. The spanin complex is composed of spanin inner membrane subunit and spanin outer membrane subunit.

It localises to the host cell outer membrane. Component of the spanin complex that disrupts the host outer membrane and participates in cell lysis during virus exit. The spanin complex conducts the final step in host lysis by disrupting the outer membrane after holin and endolysin action have permeabilized the inner membrane and degraded the host peptidoglycans. Host outer membrane disruption is possibly due to local fusion between the inner and outer membrane performed by the spanin complex. The polypeptide is Spanin, outer lipoprotein subunit (Enterobacteriaceae (Bacteriophage Mu)).